Here is a 128-residue protein sequence, read N- to C-terminus: Fluoride-specific ion channel FluC (128 aa).

Transmembrane regions (helical) follow at residues 10 to 30 (FLAVAIGAALGACARWLAGLW), 40 to 60 (TLLVNLAGGYLIGLALAVLLA), 71 to 91 (AAVTGFLGGLTTFSTFSAETV), and 102 to 122 (ALGYAALSLVGSLALTALGLA). The Na(+) site is built by G78 and T81.

Belongs to the fluoride channel Fluc/FEX (TC 1.A.43) family.

Its subcellular location is the cell inner membrane. It catalyses the reaction fluoride(in) = fluoride(out). Na(+) is not transported, but it plays an essential structural role and its presence is essential for fluoride channel function. In terms of biological role, fluoride-specific ion channel. Important for reducing fluoride concentration in the cell, thus reducing its toxicity. This chain is Fluoride-specific ion channel FluC, found in Bordetella petrii (strain ATCC BAA-461 / DSM 12804 / CCUG 43448).